A 756-amino-acid chain; its full sequence is NUT family member 2F (756 aa).

Disordered stretches follow at residues 173–200, 293–438, 511–639, and 653–756; these read GNAR…PDDS, IQKS…TSDP, RAAP…LPGM, and RLSQ…HCSQ. The segment covering 304 to 321 has biased composition (pro residues); sequence SLPPPAPPRLEPRGPPAP. Basic and acidic residues predominate over residues 417–427; it reads EGQREKGKVEQ. The span at 543 to 560 shows a compositional bias: polar residues; it reads QRVSVETSPPQTAAQDPQ. Over residues 654-665 the composition is skewed to low complexity; sequence LSQSPVPSSGLL. Residues 746-756 show a composition bias toward basic residues; it reads SRRKKKRHCSQ.

It belongs to the NUT family.

This Homo sapiens (Human) protein is NUT family member 2F (NUTM2F).